The sequence spans 491 residues: tRNA-2-methylthio-N(6)-dimethylallyladenosine synthase (491 aa).

Residues 3-119 enclose the MTTase N-terminal domain; the sequence is RSYQIRTYGC…LPTLLERARH (117 aa). The [4Fe-4S] cluster site is built by Cys12, Cys48, Cys82, Cys156, Cys160, and Cys163. Residues 142–372 form the Radical SAM core domain; sequence RESAYSGWVS…IELQNQISWD (231 aa). One can recognise a TRAM domain in the interval 375 to 446; sequence KELVGRSVEL…PHHLVADSEI (72 aa).

This sequence belongs to the methylthiotransferase family. MiaB subfamily. As to quaternary structure, monomer. [4Fe-4S] cluster serves as cofactor.

Its subcellular location is the cytoplasm. It carries out the reaction N(6)-dimethylallyladenosine(37) in tRNA + (sulfur carrier)-SH + AH2 + 2 S-adenosyl-L-methionine = 2-methylsulfanyl-N(6)-dimethylallyladenosine(37) in tRNA + (sulfur carrier)-H + 5'-deoxyadenosine + L-methionine + A + S-adenosyl-L-homocysteine + 2 H(+). In terms of biological role, catalyzes the methylthiolation of N6-(dimethylallyl)adenosine (i(6)A), leading to the formation of 2-methylthio-N6-(dimethylallyl)adenosine (ms(2)i(6)A) at position 37 in tRNAs that read codons beginning with uridine. The polypeptide is tRNA-2-methylthio-N(6)-dimethylallyladenosine synthase (Saccharopolyspora erythraea (strain ATCC 11635 / DSM 40517 / JCM 4748 / NBRC 13426 / NCIMB 8594 / NRRL 2338)).